The chain runs to 399 residues: Protochlorophyllide reductase, chloroplastic (399 aa).

Residues 1-64 (MALQTASMLP…RQKVGAVRAE (64 aa)) constitute a chloroplast transit peptide.

It belongs to the short-chain dehydrogenases/reductases (SDR) family. POR subfamily.

The protein localises to the plastid. Its subcellular location is the chloroplast. The catalysed reaction is chlorophyllide a + NADP(+) = protochlorophyllide a + NADPH + H(+). Its pathway is porphyrin-containing compound metabolism; chlorophyll biosynthesis. Its function is as follows. Phototransformation of protochlorophyllide (Pchlide) to chlorophyllide (Chlide). The chain is Protochlorophyllide reductase, chloroplastic (3PCR) from Pisum sativum (Garden pea).